The primary structure comprises 347 residues: Anthranilate phosphoribosyltransferase (347 aa).

Residues Gly88, 91–92, Thr96, 98–101, 116–124, and Ser128 each bind 5-phospho-alpha-D-ribose 1-diphosphate; these read GD, NIST, and KHGNRSVSS. Gly88 is a binding site for anthranilate. Ser100 contacts Mg(2+). An anthranilate-binding site is contributed by Asn119. Arg174 contributes to the anthranilate binding site. Mg(2+)-binding residues include Asp232 and Glu233.

The protein belongs to the anthranilate phosphoribosyltransferase family. Homodimer. It depends on Mg(2+) as a cofactor.

The enzyme catalyses N-(5-phospho-beta-D-ribosyl)anthranilate + diphosphate = 5-phospho-alpha-D-ribose 1-diphosphate + anthranilate. The protein operates within amino-acid biosynthesis; L-tryptophan biosynthesis; L-tryptophan from chorismate: step 2/5. In terms of biological role, catalyzes the transfer of the phosphoribosyl group of 5-phosphorylribose-1-pyrophosphate (PRPP) to anthranilate to yield N-(5'-phosphoribosyl)-anthranilate (PRA). This chain is Anthranilate phosphoribosyltransferase, found in Shewanella oneidensis (strain ATCC 700550 / JCM 31522 / CIP 106686 / LMG 19005 / NCIMB 14063 / MR-1).